Consider the following 156-residue polypeptide: Small ribosomal subunit protein uS7 (156 aa).

The protein belongs to the universal ribosomal protein uS7 family. As to quaternary structure, part of the 30S ribosomal subunit. Contacts proteins S9 and S11.

One of the primary rRNA binding proteins, it binds directly to 16S rRNA where it nucleates assembly of the head domain of the 30S subunit. Is located at the subunit interface close to the decoding center, probably blocks exit of the E-site tRNA. The chain is Small ribosomal subunit protein uS7 from Prochlorococcus marinus (strain MIT 9303).